The following is a 448-amino-acid chain: UDP-N-acetylglucosamine--dolichyl-phosphate N-acetylglucosaminephosphotransferase (448 aa).

The chain crosses the membrane as a helical span at residues 24–44; that stretch reads ALVAAVGFGIAGYLATDMLIP. Residues 58–60 and E70 each bind UDP-N-acetyl-alpha-D-glucosamine; that span reads KDL. 2 helical membrane-spanning segments follow: residues 72-92 and 129-149; these read IGAI…PFIF and YLSA…DDLF. K156 provides a ligand contact to dolichyl phosphate. A run of 2 helical transmembrane segments spans residues 157-177 and 202-222; these read FFLP…DFGV and YVYM…LAGV. 210 to 218 is a binding site for dolichyl phosphate; the sequence is IFCPNSINI. N217 contacts Mg(2+). Position 223 (N223) interacts with UDP-N-acetyl-alpha-D-glucosamine. Helical transmembrane passes span 231–251, 256–276, 283–303, and 309–329; these read IVLA…GPLA, HRFS…LWKW, VFVG…VGIL, and TMLL…PQLF. D287 serves as a coordination point for Mg(2+). Position 336 to 338 (336 to 338) interacts with UDP-N-acetyl-alpha-D-glucosamine; sequence RHR. Helical transmembrane passes span 387-407 and 419-439; these read EIIS…FGPM and LQFC…AIIF.

This sequence belongs to the glycosyltransferase 4 family. It depends on Mg(2+) as a cofactor.

It is found in the endoplasmic reticulum membrane. The catalysed reaction is a di-trans,poly-cis-dolichyl phosphate + UDP-N-acetyl-alpha-D-glucosamine = an N-acetyl-alpha-D-glucosaminyl-diphospho-di-trans,poly-cis-dolichol + UMP. Its pathway is protein modification; protein glycosylation. With respect to regulation, inhibited by natural nucleoside antibiotic tunicamycin, which acts as a structural analog and competitor of UDP-GlcNAc. Its function is as follows. UDP-N-acetylglucosamine--dolichyl-phosphate N-acetylglucosaminephosphotransferase that operates in the biosynthetic pathway of dolichol-linked oligosaccharides, the glycan precursors employed in protein asparagine (N)-glycosylation. The assembly of dolichol-linked oligosaccharides begins on the cytosolic side of the endoplasmic reticulum membrane and finishes in its lumen. The sequential addition of sugars to dolichol pyrophosphate produces dolichol-linked oligosaccharides containing fourteen sugars, including two GlcNAcs, nine mannoses and three glucoses. Once assembled, the oligosaccharide is transferred from the lipid to nascent proteins by oligosaccharyltransferases. Catalyzes the initial step of dolichol-linked oligosaccharide biosynthesis, transfering GlcNAc-1-P from cytosolic UDP-GlcNAc onto the carrier lipid dolichyl phosphate (P-dolichol), yielding GlcNAc-P-P-dolichol embedded in the cytoplasmic leaflet of the endoplasmic reticulum membrane. The sequence is that of UDP-N-acetylglucosamine--dolichyl-phosphate N-acetylglucosaminephosphotransferase (ALG7) from Saccharomyces cerevisiae (strain ATCC 204508 / S288c) (Baker's yeast).